The chain runs to 116 residues: Large ribosomal subunit protein uL24 (116 aa).

The interval 1-27 (MAGRKSSTPTRHKMHVKTGDTVQVISG) is disordered.

Belongs to the universal ribosomal protein uL24 family. Part of the 50S ribosomal subunit.

Functionally, one of two assembly initiator proteins, it binds directly to the 5'-end of the 23S rRNA, where it nucleates assembly of the 50S subunit. Its function is as follows. One of the proteins that surrounds the polypeptide exit tunnel on the outside of the subunit. The protein is Large ribosomal subunit protein uL24 of Picosynechococcus sp. (strain ATCC 27264 / PCC 7002 / PR-6) (Agmenellum quadruplicatum).